The following is a 442-amino-acid chain: Putative protein YjbI (442 aa).

The protein is Putative protein YjbI (yjbI) of Escherichia coli (strain K12).